The sequence spans 61 residues: Large ribosomal subunit protein uL30 (61 aa).

It belongs to the universal ribosomal protein uL30 family. Part of the 50S ribosomal subunit.

The polypeptide is Large ribosomal subunit protein uL30 (Thermosipho melanesiensis (strain DSM 12029 / CIP 104789 / BI429)).